The following is a 601-amino-acid chain: Elongation factor 4 (601 aa).

The tr-type G domain maps to 7-189 (RNIRNFSIIA…AIVHRIPPPK (183 aa)). GTP is bound by residues 19 to 24 (DHGKST) and 136 to 139 (NKID).

This sequence belongs to the TRAFAC class translation factor GTPase superfamily. Classic translation factor GTPase family. LepA subfamily.

Its subcellular location is the cell inner membrane. The catalysed reaction is GTP + H2O = GDP + phosphate + H(+). Functionally, required for accurate and efficient protein synthesis under certain stress conditions. May act as a fidelity factor of the translation reaction, by catalyzing a one-codon backward translocation of tRNAs on improperly translocated ribosomes. Back-translocation proceeds from a post-translocation (POST) complex to a pre-translocation (PRE) complex, thus giving elongation factor G a second chance to translocate the tRNAs correctly. Binds to ribosomes in a GTP-dependent manner. The sequence is that of Elongation factor 4 from Xanthomonas axonopodis pv. citri (strain 306).